The following is a 508-amino-acid chain: Photosystem II CP47 reaction center protein (508 aa).

Helical transmembrane passes span 21 to 36 (AVHI…WAGS), 101 to 115 (IVFS…IWHW), 140 to 156 (GIHL…FGAF), 203 to 218 (IAAG…FHLS), 237 to 252 (VLSS…AFVV), and 457 to 472 (SFAL…HGAR).

This sequence belongs to the PsbB/PsbC family. PsbB subfamily. As to quaternary structure, PSII is composed of 1 copy each of membrane proteins PsbA, PsbB, PsbC, PsbD, PsbE, PsbF, PsbH, PsbI, PsbJ, PsbK, PsbL, PsbM, PsbT, PsbX, PsbY, PsbZ, Psb30/Ycf12, at least 3 peripheral proteins of the oxygen-evolving complex and a large number of cofactors. It forms dimeric complexes. Binds multiple chlorophylls. PSII binds additional chlorophylls, carotenoids and specific lipids. is required as a cofactor.

It localises to the plastid. The protein resides in the chloroplast thylakoid membrane. Functionally, one of the components of the core complex of photosystem II (PSII). It binds chlorophyll and helps catalyze the primary light-induced photochemical processes of PSII. PSII is a light-driven water:plastoquinone oxidoreductase, using light energy to abstract electrons from H(2)O, generating O(2) and a proton gradient subsequently used for ATP formation. This chain is Photosystem II CP47 reaction center protein, found in Nandina domestica (Heavenly bamboo).